Consider the following 497-residue polypeptide: Glycerol kinase (497 aa).

Thr-12 contributes to the ADP binding site. Thr-12, Thr-13, and Ser-14 together coordinate ATP. Sn-glycerol 3-phosphate is bound at residue Thr-12. Arg-16 is a binding site for ADP. Sn-glycerol 3-phosphate-binding residues include Arg-82, Glu-83, Tyr-134, and Asp-243. Glycerol is bound by residues Arg-82, Glu-83, Tyr-134, Asp-243, and Gln-244. ADP contacts are provided by Thr-265 and Gly-308. 4 residues coordinate ATP: Thr-265, Gly-308, Gln-312, and Gly-411. Position 411 (Gly-411) interacts with ADP.

This sequence belongs to the FGGY kinase family.

The enzyme catalyses glycerol + ATP = sn-glycerol 3-phosphate + ADP + H(+). Its pathway is polyol metabolism; glycerol degradation via glycerol kinase pathway; sn-glycerol 3-phosphate from glycerol: step 1/1. Its activity is regulated as follows. Inhibited by fructose 1,6-bisphosphate (FBP). Its function is as follows. Key enzyme in the regulation of glycerol uptake and metabolism. Catalyzes the phosphorylation of glycerol to yield sn-glycerol 3-phosphate. This Xanthobacter autotrophicus (strain ATCC BAA-1158 / Py2) protein is Glycerol kinase.